A 398-amino-acid polypeptide reads, in one-letter code: MSSLSRVLRGTFNTCPIRRFSSAATVVSEPTAVTAAISPPQKSLTSLVNGERNPKRIVEKFKKACESERFRTNIAVYDRTVRRLVAAKRLHYVEEILEEQKKYRDMSKEGFAARIISLYGKAGMFENAQKVFEEMPNRDCKRSVLSFNALLSAYRLSKKFDVVEELFNELPGKLSIKPDIVSYNTLIKALCEKDSLPEAVALLDEIENKGLKPDIVTFNTLLLSSYLKGQFELGEEIWAKMVEKNVAIDIRTYNARLLGLANEAKSKELVNLFGELKASGLKPDVFSFNAMIRGSINEGKMDEAEAWYKEIVKHGYRPDKATFALLLPAMCKAGDFESAIELFKETFSKRYLVGQTTLQQLVDELVKGSKREEAEEIVKIAKTNDFLKLKLNLPSQEE.

The transit peptide at 1 to 19 directs the protein to the mitochondrion; sequence MSSLSRVLRGTFNTCPIRR. PPR repeat units follow at residues 108–142, 143–173, 179–213, 214–248, 249–283, 284–318, and 319–353; these read KEGFAARIISLYGKAGMFENAQKVFEEMPNRDCKR, SVLSFNALLSAYRLSKKFDVVEELFNELPGK, DIVSYNTLIKALCEKDSLPEAVALLDEIENKGLKP, DIVTFNTLLLSSYLKGQFELGEEIWAKMVEKNVAI, DIRTYNARLLGLANEAKSKELVNLFGELKASGLKP, DVFSFNAMIRGSINEGKMDEAEAWYKEIVKHGYRP, and DKATFALLLPAMCKAGDFESAIELFKETFSKRYLV.

Belongs to the PPR family. P subfamily. Component of the mitochondrial ribosome small subunit.

It localises to the mitochondrion. The chain is Small ribosomal subunit protein mS78 (rPPR3a) from Arabidopsis thaliana (Mouse-ear cress).